The primary structure comprises 318 residues: MNYQVLLYYKYMTIDDPEQFAQDHLAFCKAHHLKGRILVSTEGINGTLSGTKEETEQYMAHMHADERFKDMVFKIDEAEGHAFKKMHVRPRKEIVALDLEDDVDPRHTTGQYLSPVEFRKALEDDDTVIIDARNDYEFDLGHFRGAIRPNITRFRDLPDWIKENKALFADKKVVTYCTGGIRCEKFSGWLLKEGFEDVAQLHGGIATYGKDPETKSEYWDGKMYVFDDRISVDINQVEKTIIGKDWFDGKPCERYINCANPECNKQILVSEENETKYLGACSYECAKHERNRYVQANNISDNEWQQRLTNFDDLHQHA.

The Rhodanese domain occupies glutamate 123 to glutamate 217. Cysteine 177 functions as the Cysteine persulfide intermediate in the catalytic mechanism.

The protein belongs to the TrhO family.

It carries out the reaction uridine(34) in tRNA + AH2 + O2 = 5-hydroxyuridine(34) in tRNA + A + H2O. Its function is as follows. Catalyzes oxygen-dependent 5-hydroxyuridine (ho5U) modification at position 34 in tRNAs. The sequence is that of tRNA uridine(34) hydroxylase from Staphylococcus aureus (strain COL).